A 505-amino-acid chain; its full sequence is ATP synthase subunit alpha, chloroplastic (505 aa).

170–177 (GDRQTGKT) provides a ligand contact to ATP.

The protein belongs to the ATPase alpha/beta chains family. F-type ATPases have 2 components, CF(1) - the catalytic core - and CF(0) - the membrane proton channel. CF(1) has five subunits: alpha(3), beta(3), gamma(1), delta(1), epsilon(1). CF(0) has four main subunits: a, b, b' and c.

The protein localises to the plastid. Its subcellular location is the chloroplast thylakoid membrane. The enzyme catalyses ATP + H2O + 4 H(+)(in) = ADP + phosphate + 5 H(+)(out). Functionally, produces ATP from ADP in the presence of a proton gradient across the membrane. The alpha chain is a regulatory subunit. The protein is ATP synthase subunit alpha, chloroplastic of Oenothera elata subsp. hookeri (Hooker's evening primrose).